We begin with the raw amino-acid sequence, 299 residues long: Centriolar and ciliogenesis-associated protein HYLS1 (299 aa).

S179 is modified (phosphoserine).

The protein belongs to the HYLS1 family.

The protein resides in the cytoplasm. Its subcellular location is the cell projection. It is found in the cilium. The protein localises to the cytoskeleton. It localises to the microtubule organizing center. The protein resides in the centrosome. Its subcellular location is the centriole. Its function is as follows. Plays a role in ciliogenesis. The protein is Centriolar and ciliogenesis-associated protein HYLS1 of Homo sapiens (Human).